Here is a 206-residue protein sequence, read N- to C-terminus: Phosphatidyl-N-methylethanolamine N-methyltransferase (206 aa).

The Lumenal segment spans residues 1–20; sequence MKESVQEIIQQLIHSVDLQS. The segment at residues 21–41 is an intramembrane region (helical); it reads SKFQLAIVCTMFNPIFWNIVA. The Lumenal segment spans residues 42–53; sequence RMEYHKHSLTKM. Residues 54-74 traverse the membrane as a helical segment; sequence CGGARKGCYMLAATIFSLGIV. The Cytoplasmic portion of the chain corresponds to 75–101; that stretch reads RDMVYESALREQPTCSLITGENWTKLG. Residues 102–122 form a helical membrane-spanning segment; the sequence is VALFGLGQVLVLSSMYKLGIT. 106 to 108 contacts S-adenosyl-L-methionine; the sequence is GLG. Over 123–165 the chain is Lumenal; that stretch reads GTYLGDYFGILMDERVTGFPFNVSNNPMYQGSTLSFLGIALYK. The chain crosses the membrane as a helical span at residues 166-186; that stretch reads GKPAGLVVSAVVYFMYKIALR. Residues 187–206 lie on the Cytoplasmic side of the membrane; it reads WEEPFTAMIYANRDKAKKNM. Residue 188–189 participates in S-adenosyl-L-methionine binding; sequence EE.

Belongs to the class VI-like SAM-binding methyltransferase superfamily. PEMT/PEM2 methyltransferase family.

Its subcellular location is the endoplasmic reticulum membrane. The protein resides in the mitochondrion membrane. It catalyses the reaction a 1,2-diacyl-sn-glycero-3-phosphoethanolamine + S-adenosyl-L-methionine = a 1,2-diacyl-sn-glycero-3-phospho-N-methylethanolamine + S-adenosyl-L-homocysteine + H(+). It carries out the reaction a 1,2-diacyl-sn-glycero-3-phospho-N-methylethanolamine + S-adenosyl-L-methionine = a 1,2-diacyl-sn-glycero-3-phospho-N,N-dimethylethanolamine + S-adenosyl-L-homocysteine + H(+). The catalysed reaction is a 1,2-diacyl-sn-glycero-3-phospho-N,N-dimethylethanolamine + S-adenosyl-L-methionine = a 1,2-diacyl-sn-glycero-3-phosphocholine + S-adenosyl-L-homocysteine + H(+). It participates in phospholipid metabolism; phosphatidylcholine biosynthesis. Catalyzes the second two steps of the methylation pathway of phosphatidylcholine biosynthesis, the SAM-dependent methylation of phosphatidylmonomethylethanolamine (PMME) to phosphatidyldimethylethanolamine (PDME) and of PDME to phosphatidylcholine (PC). Can also catalyze the first methylation reaction of PE to PMME in the absence of PE methyltransferase CHO2. In Saccharomyces cerevisiae (strain ATCC 204508 / S288c) (Baker's yeast), this protein is Phosphatidyl-N-methylethanolamine N-methyltransferase.